Reading from the N-terminus, the 354-residue chain is uncharacterized protein (354 aa).

It belongs to the band 7/mec-2 family.

It is found in the mitochondrion. This is an uncharacterized protein from Schizosaccharomyces pombe (strain 972 / ATCC 24843) (Fission yeast).